The chain runs to 360 residues: MQFLGRSISKSIRPSLNSTARKSWVLSSQQFLSTSSTESSSRTRGGGGGNRAEKSSEEWPRPMEVPYQPKIANSIDLIGYVHQPVQFDSTLDGKFWAGTVISHEPSSDSKSESDSSSNFWIPVLFEGDLAHTANSYLKKNDRVHITGQILGDVIQSGANSDQAHVQLFKSFHGSFSHQVMVRDLHYIEGSKAMPKVLPTLDQNEGVLKHSASVQRGREFGTNLWFDLVDKPNEWCDYREMKQNGSVNPKHPDFKKKDGSQALWLNNAPTEILSELKDVKFDIPKYAKQPKAGEESWKDLVDNMNKWWDNRVDKRTPKSPDFKHKETGVGLWLSDSPSWVLEKLPPPKSKTSDIYGVQEMF.

The transit peptide at 1 to 61 (MQFLGRSISK…AEKSSEEWPR (61 aa)) directs the protein to the chloroplast. The disordered stretch occupies residues 28–64 (SQQFLSTSSTESSSRTRGGGGGNRAEKSSEEWPRPME). The span at 33 to 43 (STSSTESSSRT) shows a compositional bias: low complexity. Over residues 51–61 (RAEKSSEEWPR) the composition is skewed to basic and acidic residues. In terms of domain architecture, SSB spans 71–188 (IANSIDLIGY…VMVRDLHYIE (118 aa)). PDF region regions lie at residues 224–276 (WFDL…SELK) and 296–344 (WKDL…EKLP).

The protein resides in the plastid. It is found in the chloroplast. Functionally, binds single-stranded DNA. This chain is Protein OSB4, chloroplastic (OSB4), found in Arabidopsis thaliana (Mouse-ear cress).